Consider the following 1035-residue polypeptide: Retinoblastoma-related protein (1035 aa).

The interval 403–426 is disordered; that stretch reads ITSPLSPHRSPASHANGIPGSANS. The domain A stretch occupies residues 431–632; it reads TPVSTAMTTA…EKGSSLYNSL (202 aa). The segment at 431–885 is pocket; it reads TPVSTAMTTA…NEIFIPAAKP (455 aa). The segment at 633–753 is spacer; sequence TVARPALSAE…PGGGGETCAE (121 aa). 2 disordered regions span residues 674–697 and 721–748; these read PSLQKHETSPGSGQNGDLRSPKRP and GNLKSKLPPPPLQSAFASPTRPNPGGGG. The domain B stretch occupies residues 754-885; it reads TGINVFFTKI…NEIFIPAAKP (132 aa).

Belongs to the retinoblastoma protein (RB) family.

The protein localises to the nucleus. Regulator of biological processes that recruits a histone deacetylase to control gene transcription. May play a role in the entry into mitosis, negatively regulating the cell proliferation. Formation of stable complexes with geminiviridae replication-associated proteins may create a cellular environment which favors viral DNA replication. In Populus trichocarpa (Western balsam poplar), this protein is Retinoblastoma-related protein (RBL901).